A 238-amino-acid polypeptide reads, in one-letter code: Small ribosomal subunit protein uS3 (238 aa).

Residues 39-109 enclose the KH type-2 domain; that stretch reads IRTFINQQLA…TIKVNVVEVN (71 aa). Residues 215 to 238 are disordered; sequence EAVPREATRRSPQRRLPQFENRSN.

The protein belongs to the universal ribosomal protein uS3 family. Part of the 30S ribosomal subunit. Forms a tight complex with proteins S10 and S14.

Functionally, binds the lower part of the 30S subunit head. Binds mRNA in the 70S ribosome, positioning it for translation. The protein is Small ribosomal subunit protein uS3 of Thermosynechococcus vestitus (strain NIES-2133 / IAM M-273 / BP-1).